We begin with the raw amino-acid sequence, 42 residues long: Snaclec lebecetin subunit alpha (42 aa).

Residues 1-42 (DQDCLPGWSSHEGHCYKVFNLDKTWEDAEKFCTEQPSNGHLV) form the C-type lectin domain. A disulfide bond links cysteine 4 and cysteine 15.

As to quaternary structure, heterodimer of subunits alpha and beta; disulfide-linked. Ca(2+) is required as a cofactor. Glycosylated. As to expression, expressed by the venom gland.

Its subcellular location is the secreted. Its function is as follows. Binds to the platelet GPIb/IX/V receptor system and inhibits ristocetin-induced platelet aggregation in human platelet-rich plasma. Strongly inhibits platelet aggregation induced by ADP, calcium ionophore, thrombin and collagen. Does not inhibit U46619-induced platelet aggregation. In Macrovipera lebetinus (Levantine viper), this protein is Snaclec lebecetin subunit alpha.